A 185-amino-acid polypeptide reads, in one-letter code: Ribosome-recycling factor (185 aa).

This sequence belongs to the RRF family.

The protein localises to the cytoplasm. Its function is as follows. Responsible for the release of ribosomes from messenger RNA at the termination of protein biosynthesis. May increase the efficiency of translation by recycling ribosomes from one round of translation to another. The protein is Ribosome-recycling factor of Wolbachia sp. subsp. Brugia malayi (strain TRS).